Here is a 71-residue protein sequence, read N- to C-terminus: Biotinylated protein TB7.3 (71 aa).

The 70-residue stretch at 2 to 71 (AEDVRAEIVA…QAGDLIAVIS (70 aa)) folds into the Biotinyl-binding domain. Lys-37 is modified (N6-biotinyllysine).

The polypeptide is Biotinylated protein TB7.3 (Mycobacterium bovis (strain ATCC BAA-935 / AF2122/97)).